Here is an 855-residue protein sequence, read N- to C-terminus: Envelope glycoprotein gp160 (855 aa).

Positions Met-1–Glu-31 are cleaved as a signal peptide. Over Asn-32 to Ile-683 the chain is Extracellular. A disulfide bridge links Cys-53 with Cys-73. 17 N-linked (GlcNAc...) asparagine; by host glycosylation sites follow: Asn-87, Asn-134, Asn-142, Asn-145, Asn-161, Asn-165, Asn-192, Asn-202, Asn-239, Asn-246, Asn-267, Asn-281, Asn-294, Asn-300, Asn-306, Asn-336, and Asn-359. 5 disulfides stabilise this stretch: Cys-118/Cys-210, Cys-125/Cys-201, Cys-130/Cys-162, Cys-223/Cys-252, and Cys-233/Cys-244. The tract at residues Cys-130 to Asn-161 is V1. The V2 stretch occupies residues Cys-162–Cys-201. A V3 region spans residues Cys-301–His-334. The cysteines at positions 301 and 335 are disulfide-linked. The interval Ser-367 to His-377 is CD4-binding loop. 2 cysteine pairs are disulfide-bonded: Cys-381/Cys-442 and Cys-388/Cys-415. Residues Cys-388 to Cys-415 are V4. 5 N-linked (GlcNAc...) asparagine; by host glycosylation sites follow: Asn-389, Asn-395, Asn-399, Asn-405, and Asn-458. 2 V5 regions span residues Asn-458 to Ala-469 and Thr-460 to Ala-469. The fusion peptide stretch occupies residues Ala-510 to Ala-531. The immunosuppression stretch occupies residues Lys-573–Leu-591. Residues Cys-597 and Cys-603 are joined by a disulfide bond. Residues Asn-610, Asn-615, Asn-624, and Asn-636 are each glycosylated (N-linked (GlcNAc...) asparagine; by host). Residues Arg-632–Ala-666 are a coiled coil. The MPER; binding to GalCer stretch occupies residues Glu-661–Arg-682. The chain crosses the membrane as a helical span at residues Phe-684–Val-704. Over Asn-705–Leu-855 the chain is Cytoplasmic. The short motif at Tyr-711–Leu-714 is the YXXL motif; contains endocytosis signal element. The tract at residues Thr-718–Asp-742 is disordered. Cys-763 is lipidated: S-palmitoyl cysteine; by host. Residues Leu-854–Leu-855 carry the Di-leucine internalization motif motif.

It belongs to the HIV-1 env protein family. In terms of assembly, the mature envelope protein (Env) consists of a homotrimer of non-covalently associated gp120-gp41 heterodimers. The resulting complex protrudes from the virus surface as a spike. There seems to be as few as 10 spikes on the average virion. Interacts with host CD4, CCR5 and CXCR4. Gp120 also interacts with the C-type lectins CD209/DC-SIGN and CLEC4M/DC-SIGNR (collectively referred to as DC-SIGN(R)). Gp120 and gp41 interact with GalCer. Gp120 interacts with host ITGA4/ITGB7 complex; on CD4+ T-cells, this interaction results in rapid activation of integrin ITGAL/LFA-1, which facilitates efficient cell-to-cell spreading of HIV-1. Gp120 interacts with cell-associated heparan sulfate; this interaction increases virus infectivity on permissive cells and may be involved in infection of CD4- cells. As to quaternary structure, the mature envelope protein (Env) consists of a homotrimer of non-covalently associated gp120-gp41 heterodimers. The resulting complex protrudes from the virus surface as a spike. There seems to be as few as 10 spikes on the average virion. In terms of processing, highly glycosylated by host. The high number of glycan on the protein is reffered to as 'glycan shield' because it contributes to hide protein sequence from adaptive immune system. Palmitoylation of the transmembrane protein and of Env polyprotein (prior to its proteolytic cleavage) is essential for their association with host cell membrane lipid rafts. Palmitoylation is therefore required for envelope trafficking to classical lipid rafts, but not for viral replication. Post-translationally, specific enzymatic cleavages in vivo yield mature proteins. Envelope glycoproteins are synthesized as an inactive precursor that is heavily N-glycosylated and processed likely by host cell furin in the Golgi to yield the mature SU and TM proteins. The cleavage site between SU and TM requires the minimal sequence [KR]-X-[KR]-R. About 2 of the 9 disulfide bonds of gp41 are reduced by P4HB/PDI, following binding to CD4 receptor.

The protein resides in the virion membrane. It localises to the host cell membrane. The protein localises to the host endosome membrane. In terms of biological role, oligomerizes in the host endoplasmic reticulum into predominantly trimers. In a second time, gp160 transits in the host Golgi, where glycosylation is completed. The precursor is then proteolytically cleaved in the trans-Golgi and thereby activated by cellular furin or furin-like proteases to produce gp120 and gp41. Its function is as follows. Attaches the virus to the host lymphoid cell by binding to the primary receptor CD4. This interaction induces a structural rearrangement creating a high affinity binding site for a chemokine coreceptor like CXCR4 and/or CCR5. Acts as a ligand for CD209/DC-SIGN and CLEC4M/DC-SIGNR, which are respectively found on dendritic cells (DCs), and on endothelial cells of liver sinusoids and lymph node sinuses. These interactions allow capture of viral particles at mucosal surfaces by these cells and subsequent transmission to permissive cells. HIV subverts the migration properties of dendritic cells to gain access to CD4+ T-cells in lymph nodes. Virus transmission to permissive T-cells occurs either in trans (without DCs infection, through viral capture and transmission), or in cis (following DCs productive infection, through the usual CD4-gp120 interaction), thereby inducing a robust infection. In trans infection, bound virions remain infectious over days and it is proposed that they are not degraded, but protected in non-lysosomal acidic organelles within the DCs close to the cell membrane thus contributing to the viral infectious potential during DCs' migration from the periphery to the lymphoid tissues. On arrival at lymphoid tissues, intact virions recycle back to DCs' cell surface allowing virus transmission to CD4+ T-cells. Functionally, acts as a class I viral fusion protein. Under the current model, the protein has at least 3 conformational states: pre-fusion native state, pre-hairpin intermediate state, and post-fusion hairpin state. During fusion of viral and target intracellular membranes, the coiled coil regions (heptad repeats) assume a trimer-of-hairpins structure, positioning the fusion peptide in close proximity to the C-terminal region of the ectodomain. The formation of this structure appears to drive apposition and subsequent fusion of viral and target cell membranes. Complete fusion occurs in host cell endosomes and is dynamin-dependent, however some lipid transfer might occur at the plasma membrane. The virus undergoes clathrin-dependent internalization long before endosomal fusion, thus minimizing the surface exposure of conserved viral epitopes during fusion and reducing the efficacy of inhibitors targeting these epitopes. Membranes fusion leads to delivery of the nucleocapsid into the cytoplasm. This chain is Envelope glycoprotein gp160, found in Homo sapiens (Human).